A 139-amino-acid polypeptide reads, in one-letter code: uncharacterized protein (139 aa).

The segment at 1–116 (MYNPWQVGAS…TRPRVVARGK (116 aa)) is disordered. Low complexity-rich tracts occupy residues 50-70 (RPRP…GPRP) and 84-110 (LPAY…TRPR).

This is an uncharacterized protein from Homo sapiens (Human).